The following is a 613-amino-acid chain: Ribosome-associated molecular chaperone SSB1 (613 aa).

A nucleotide binding domain (NBD) region spans residues 1 to 391 (MADGVFQGAI…ILTGQSTSDE (391 aa)). Residues 16–18 (TTY), Lys-73, 205–207 (GGT), 271–278 (ERAKRTLS), and Gly-342 contribute to the ATP site. Residues 392–402 (TKDLLLLDVAP) are inter-domain linker. A substrate binding domain (SBD) region spans residues 403–613 (LSLGVGMQGD…RVVTKAMSSR (211 aa)). Residues 516 to 612 (SEDIEKMVNQ…KRVVTKAMSS (97 aa)) form a lid domain (SBDalpha) region. The Nuclear export signal motif lies at 574-582 (IEAALADAL).

Belongs to the heat shock protein 70 family. Ssb-type Hsp70 subfamily. Binds to ribosomes. Binds close to the ribosomal tunnel exit via contacts with both ribosomal proteins and rRNA. Directly interacts with nascent polypeptides. This interaction is dependent on the ribosome-associated complex (RAC). Interacts with SSE1. Interacts with FES1.

It is found in the cytoplasm. It catalyses the reaction ATP + H2O = ADP + phosphate + H(+). In terms of biological role, ribosome-bound, Hsp70-type chaperone that assists in the cotranslational folding of newly synthesized proteins in the cytosol. Stimulates folding by interacting with nascent chains, binding to short, largely hydrophobic sequences exposed by unfolded proteins, thereby stabilizing longer, more slowly translated, and aggregation-prone nascent polypeptides and domains that cannot fold stably until fully synthesized. The Hsp70-protein substrate interaction depends on ATP-binding and on allosteric regulation between the NBD and the SBD. The ATP-bound state is characterized by a fast exchange rate of substrate (low affinity state), while in the ADP-bound state exchange is much slower (high affinity state). During the Hsp70 cycle, the chaperone switches between the ATP-bound state (open conformation) and the ADP-bound state (closed conformation) by major conformational rearrangements involving mainly the lid domain. Ssb cooperates with a specific Hsp40/Hsp70 co-chaperone termed the ribosome-associated complex (RAC), which stimulates the ATPase activity of the ribosome-associated pool of Ssbs and switches it to the high affinity substrate binding state. Hsp110 chaperone SSE1 and FES1 act as nucleotide exchange factors that cause substrate release. The sequence is that of Ribosome-associated molecular chaperone SSB1 (SSB1) from Nakaseomyces delphensis (Yeast).